A 132-amino-acid polypeptide reads, in one-letter code: Small ribosomal subunit protein bS6 (132 aa).

The segment at 94–132 (DAVTEESQLAKNADEKRARKATTRRPDRDDSDDNDHSED) is disordered. Positions 122 to 132 (DDSDDNDHSED) are enriched in acidic residues.

Belongs to the bacterial ribosomal protein bS6 family.

Its function is as follows. Binds together with bS18 to 16S ribosomal RNA. This is Small ribosomal subunit protein bS6 from Psychrobacter arcticus (strain DSM 17307 / VKM B-2377 / 273-4).